We begin with the raw amino-acid sequence, 411 residues long: Serine/threonine transporter SstT (411 aa).

A run of 9 helical transmembrane segments spans residues G14–A34, F43–L63, I82–F102, A141–L161, I192–G212, A218–F238, I290–L310, V330–I350, and F357–I377.

It belongs to the dicarboxylate/amino acid:cation symporter (DAACS) (TC 2.A.23) family.

It localises to the cell inner membrane. The catalysed reaction is L-serine(in) + Na(+)(in) = L-serine(out) + Na(+)(out). It carries out the reaction L-threonine(in) + Na(+)(in) = L-threonine(out) + Na(+)(out). Its function is as follows. Involved in the import of serine and threonine into the cell, with the concomitant import of sodium (symport system). This chain is Serine/threonine transporter SstT, found in Photobacterium profundum (strain SS9).